Here is a 474-residue protein sequence, read N- to C-terminus: Cysteine--tRNA ligase (474 aa).

Cysteine 30 contacts Zn(2+). The short motif at 32–42 (PTVYNFAHIGN) is the 'HIGH' region element. Zn(2+)-binding residues include cysteine 212, histidine 237, and glutamate 241. The 'KMSKS' region signature appears at 270-274 (KMSKS). An ATP-binding site is contributed by lysine 273.

It belongs to the class-I aminoacyl-tRNA synthetase family. Monomer. The cofactor is Zn(2+).

Its subcellular location is the cytoplasm. It catalyses the reaction tRNA(Cys) + L-cysteine + ATP = L-cysteinyl-tRNA(Cys) + AMP + diphosphate. This Leptospira borgpetersenii serovar Hardjo-bovis (strain JB197) protein is Cysteine--tRNA ligase.